Reading from the N-terminus, the 579-residue chain is Matrix metalloproteinase-C (579 aa).

The N-terminal stretch at 1 to 17 (MRLIYVIAILLVSTCQA) is a signal peptide. The propeptide at 18–129 (GFFSSLVSRF…SRCGVTDAPL (112 aa)) is activation peptide. A disordered region spans residues 32–51 (NSSPSSSSSSSSFSNSRKPS). A compositionally biased stretch (low complexity) spans 33–50 (SSPSSSSSSSSFSNSRKP). The short motif at 120 to 127 (SRCGVTDA) is the Cysteine switch element. Zn(2+) contacts are provided by cysteine 122, histidine 200, aspartate 202, histidine 215, and histidine 225. The N-linked (GlcNAc...) asparagine glycan is linked to asparagine 231. Histidine 254 contributes to the Zn(2+) binding site. Residue glutamate 255 is part of the active site. Residues histidine 258 and histidine 264 each coordinate Zn(2+). The disordered stretch occupies residues 307-394 (SGRSSSGSDF…SSSGSSGGGC (88 aa)). Residues 315 to 324 (DFGGSSGGGS) are compositionally biased toward gly residues. The span at 325 to 341 (RTTARPTTTTRSWFGRF) shows a compositional bias: low complexity. The span at 373 to 394 (WGSGSGSSGRGGSSSGSSGGGC) shows a compositional bias: gly residues. Hemopexin repeat units follow at residues 395–437 (PSHI…FPSA) and 438–490 (PTPV…LGFS).

Belongs to the peptidase M10A family. It depends on Zn(2+) as a cofactor.

It is found in the secreted. The protein resides in the extracellular space. It localises to the extracellular matrix. With respect to regulation, inhibited by human TIMP1 and TIMP2 and the broad MMP inhibitors BB94 (Batimastat) and CT543. Metalloproteinase. The polypeptide is Matrix metalloproteinase-C (Caenorhabditis elegans).